A 278-amino-acid polypeptide reads, in one-letter code: MTNQAPIPVIVNGAAGKMGREVIKAVAQAPDLNLVGAIDHSLEHQDKDAGELAGLSEPLEVPITNQLEPMLGYVAGDRQSPPGVIVDFTHPDSVYDNIRSAIAYGIRPVVGTTGLSPEQIQDLADFADKASTGCLIIPNFSIGMVLLQQAAIAASKYFDHVEIIELHHNQKADAPSGTAIQTAQLLGELGKTFNPALVEETEKLPGARGSIADEGIRIHSVRLPGLIAHQEVIFGAAGQIYTLRHDTSDRACYMPGVLLAIRKVLALKSLVYGLEKIL.

NAD(+) contacts are provided by residues 13–18 (GAAGKM) and 111–113 (GTT). The active-site Proton donor/acceptor is histidine 167. A (S)-2,3,4,5-tetrahydrodipicolinate-binding site is contributed by histidine 168. Residue lysine 171 is the Proton donor of the active site. 177 to 178 (GT) is a (S)-2,3,4,5-tetrahydrodipicolinate binding site.

This sequence belongs to the DapB family.

Its subcellular location is the cytoplasm. The enzyme catalyses (S)-2,3,4,5-tetrahydrodipicolinate + NAD(+) + H2O = (2S,4S)-4-hydroxy-2,3,4,5-tetrahydrodipicolinate + NADH + H(+). The catalysed reaction is (S)-2,3,4,5-tetrahydrodipicolinate + NADP(+) + H2O = (2S,4S)-4-hydroxy-2,3,4,5-tetrahydrodipicolinate + NADPH + H(+). The protein operates within amino-acid biosynthesis; L-lysine biosynthesis via DAP pathway; (S)-tetrahydrodipicolinate from L-aspartate: step 4/4. Its function is as follows. Catalyzes the conversion of 4-hydroxy-tetrahydrodipicolinate (HTPA) to tetrahydrodipicolinate. The polypeptide is 4-hydroxy-tetrahydrodipicolinate reductase (Nostoc punctiforme (strain ATCC 29133 / PCC 73102)).